The following is a 236-amino-acid chain: 5'-methylthioadenosine/S-adenosylhomocysteine nucleosidase (236 aa).

The Proton acceptor role is filled by Glu12. Substrate is bound by residues Gly78, Ile153, and 174-175 (ME). The active-site Proton donor is the Asp198.

Belongs to the PNP/UDP phosphorylase family. MtnN subfamily.

The enzyme catalyses S-adenosyl-L-homocysteine + H2O = S-(5-deoxy-D-ribos-5-yl)-L-homocysteine + adenine. The catalysed reaction is S-methyl-5'-thioadenosine + H2O = 5-(methylsulfanyl)-D-ribose + adenine. It catalyses the reaction 5'-deoxyadenosine + H2O = 5-deoxy-D-ribose + adenine. It functions in the pathway amino-acid biosynthesis; L-methionine biosynthesis via salvage pathway; S-methyl-5-thio-alpha-D-ribose 1-phosphate from S-methyl-5'-thioadenosine (hydrolase route): step 1/2. Its function is as follows. Catalyzes the irreversible cleavage of the glycosidic bond in both 5'-methylthioadenosine (MTA) and S-adenosylhomocysteine (SAH/AdoHcy) to adenine and the corresponding thioribose, 5'-methylthioribose and S-ribosylhomocysteine, respectively. Also cleaves 5'-deoxyadenosine, a toxic by-product of radical S-adenosylmethionine (SAM) enzymes, into 5-deoxyribose and adenine. The protein is 5'-methylthioadenosine/S-adenosylhomocysteine nucleosidase of Shewanella baltica (strain OS155 / ATCC BAA-1091).